Here is a 160-residue protein sequence, read N- to C-terminus: Cyclic pyranopterin monophosphate synthase (160 aa).

Residues 76-78 (LCH) and 114-115 (ME) each bind substrate. Residue Asp129 is part of the active site.

It belongs to the MoaC family. Homohexamer; trimer of dimers.

It catalyses the reaction (8S)-3',8-cyclo-7,8-dihydroguanosine 5'-triphosphate = cyclic pyranopterin phosphate + diphosphate. It participates in cofactor biosynthesis; molybdopterin biosynthesis. In terms of biological role, catalyzes the conversion of (8S)-3',8-cyclo-7,8-dihydroguanosine 5'-triphosphate to cyclic pyranopterin monophosphate (cPMP). The chain is Cyclic pyranopterin monophosphate synthase from Saccharophagus degradans (strain 2-40 / ATCC 43961 / DSM 17024).